We begin with the raw amino-acid sequence, 132 residues long: Small ribosomal subunit protein uS8 (132 aa).

This sequence belongs to the universal ribosomal protein uS8 family. Part of the 30S ribosomal subunit. Contacts proteins S5 and S12.

Functionally, one of the primary rRNA binding proteins, it binds directly to 16S rRNA central domain where it helps coordinate assembly of the platform of the 30S subunit. This Rhizobium meliloti (strain 1021) (Ensifer meliloti) protein is Small ribosomal subunit protein uS8.